Reading from the N-terminus, the 350-residue chain is Serine-threonine kinase receptor-associated protein (350 aa).

WD repeat units follow at residues 12-56 (GHTR…GTFL), 57-96 (GHKGAVWGATLNKDATKAATAAADFTAKVWDAVSGDELMT), 98-137 (AHKHIVKTVDFTQDSNYLLTGGQDKLLRIYDLNKPEAEPK), 141-179 (GHTSGIKKALWCSEDKQILSADDKTVRLWDHATMTEVKS), 180-212 (LNFNMSVSSMEYIPEGEILVITYGRSIAFHSAV), 221-262 (EAPA…ESYK), and 263-302 (GHFGPIHCVRFSPDGELYASGSEDGTLRLWQTVVGKTYGL). Ser312, Ser335, and Ser338 each carry phosphoserine. Residues 327–350 (EEELEEIASENSDSIYSSTPEVKA) are disordered. A compositionally biased stretch (polar residues) spans 337–350 (NSDSIYSSTPEVKA). Tyr342 carries the post-translational modification Phosphotyrosine.

This sequence belongs to the WD repeat STRAP family. In terms of assembly, part of the core SMN complex that contains SMN1, GEMIN2/SIP1, DDX20/GEMIN3, GEMIN4, GEMIN5, GEMIN6, GEMIN7, GEMIN8 and STRAP/UNRIP. Part of the SMN-Sm complex that contains SMN1, GEMIN2/SIP1, DDX20/GEMIN3, GEMIN4, GEMIN5, GEMIN6, GEMIN7, GEMIN8, STRAP/UNRIP and the Sm proteins SNRPB, SNRPD1, SNRPD2, SNRPD3, SNRPE, SNRPF and SNRPG. Interacts directly with GEMIN6 and GEMIN7. Associates with the SMN complex in the cytoplasm but not in the nucleus. Also interacts with CSDE1/UNR and MAWBP. Interacts with PDPK1. Interacts with TRIM48.

The protein localises to the cytoplasm. Its subcellular location is the nucleus. Its function is as follows. The SMN complex catalyzes the assembly of small nuclear ribonucleoproteins (snRNPs), the building blocks of the spliceosome, and thereby plays an important role in the splicing of cellular pre-mRNAs. Most spliceosomal snRNPs contain a common set of Sm proteins SNRPB, SNRPD1, SNRPD2, SNRPD3, SNRPE, SNRPF and SNRPG that assemble in a heptameric protein ring on the Sm site of the small nuclear RNA to form the core snRNP (Sm core). In the cytosol, the Sm proteins SNRPD1, SNRPD2, SNRPE, SNRPF and SNRPG are trapped in an inactive 6S pICln-Sm complex by the chaperone CLNS1A that controls the assembly of the core snRNP. To assemble core snRNPs, the SMN complex accepts the trapped 5Sm proteins from CLNS1A forming an intermediate. Binding of snRNA inside 5Sm triggers eviction of the SMN complex, thereby allowing binding of SNRPD3 and SNRPB to complete assembly of the core snRNP. STRAP plays a role in the cellular distribution of the SMN complex. Negatively regulates TGF-beta signaling but positively regulates the PDPK1 kinase activity by enhancing its autophosphorylation and by significantly reducing the association of PDPK1 with 14-3-3 protein. This Bos taurus (Bovine) protein is Serine-threonine kinase receptor-associated protein (STRAP).